A 98-amino-acid polypeptide reads, in one-letter code: uncharacterized protein (98 aa).

A helical membrane pass occupies residues 10-30; it reads LYGFFAVTGVLIASFIIGEIV.

The protein localises to the host membrane. This is an uncharacterized protein from Saccharolobus islandicus (Sulfolobus islandicus).